The primary structure comprises 113 residues: Neocarzinostatin (113 aa).

Intrachain disulfides connect Cys37/Cys47 and Cys88/Cys93.

Belongs to the neocarzinostatin family.

NCS has antibiotic activity (for Gram-positive bacteria) and antitumor activity (for certain mouse tumors). NCS binds non-covalently to a chromophore which is the cytotoxic and mutagenic component of the antibiotic. The chromophore binds to DNA as a weak intercalator and causes single- and double-strand breaks. The polypeptide is Neocarzinostatin (ncsA) (Streptomyces malayensis).